We begin with the raw amino-acid sequence, 218 residues long: Autophagy-related protein 101 (218 aa).

An important for interaction with ATG13 region spans residues 152 to 156 (IINIV).

Belongs to the ATG101 family. Interacts with ATG13. Associates with a complex composed of ATG13, ULK1 and RB1CC1; the association with this complex requires the presence of ATG13.

Its subcellular location is the cytoplasm. It localises to the preautophagosomal structure. In terms of biological role, autophagy factor required for autophagosome formation. Stabilizes ATG13, protecting it from proteasomal degradation. The polypeptide is Autophagy-related protein 101 (ATG101) (Homo sapiens (Human)).